The primary structure comprises 101 residues: Small ribosomal subunit protein bS18c (101 aa).

It belongs to the bacterial ribosomal protein bS18 family. Part of the 30S ribosomal subunit.

The protein resides in the plastid. It is found in the chloroplast. The polypeptide is Small ribosomal subunit protein bS18c (Eucalyptus globulus subsp. globulus (Tasmanian blue gum)).